The following is a 605-amino-acid chain: UPF0313 protein GSU2873 (605 aa).

The Radical SAM core domain occupies 291–561; it reads AYEQIRASVT…LQKALLLWHL (271 aa). 3 residues coordinate [4Fe-4S] cluster: Cys-305, Cys-309, and Cys-312. The segment at 586-605 is disordered; that stretch reads GGAAGGGGGRSGSGFRPGRT. A compositionally biased stretch (gly residues) spans 587–597; the sequence is GAAGGGGGRSG.

The protein belongs to the UPF0313 family. [4Fe-4S] cluster is required as a cofactor.

The sequence is that of UPF0313 protein GSU2873 from Geobacter sulfurreducens (strain ATCC 51573 / DSM 12127 / PCA).